Here is a 378-residue protein sequence, read N- to C-terminus: GTPase Obg (378 aa).

The Obg domain occupies 1-159; it reads MKFVDEATIE…RRLRLELKVL (159 aa). One can recognise an OBG-type G domain in the interval 160-336; it reads ADVGLLGLPN…LIWALQDYLD (177 aa). GTP-binding positions include 166–173, 191–195, 213–216, 288–291, and 317–319; these read GLPNAGKS, FTTLH, DIPG, NKLD, and SGL. Residues serine 173 and threonine 193 each contribute to the Mg(2+) site. A disordered region spans residues 345-378; the sequence is AQDQADGTYVAEDPRFDATRSDAAPPGAPRGGDE.

The protein belongs to the TRAFAC class OBG-HflX-like GTPase superfamily. OBG GTPase family. In terms of assembly, monomer. Requires Mg(2+) as cofactor.

Its subcellular location is the cytoplasm. An essential GTPase which binds GTP, GDP and possibly (p)ppGpp with moderate affinity, with high nucleotide exchange rates and a fairly low GTP hydrolysis rate. Plays a role in control of the cell cycle, stress response, ribosome biogenesis and in those bacteria that undergo differentiation, in morphogenesis control. This Bordetella petrii (strain ATCC BAA-461 / DSM 12804 / CCUG 43448) protein is GTPase Obg.